Consider the following 899-residue polypeptide: Core protein VP3 (899 aa).

The interval Met1–Ser22 is disordered.

Belongs to the orbivirus VP3 family.

Its subcellular location is the virion. The VP3 protein is one of the five proteins (with VP1, VP4, VP6 and VP7) which form the inner capsid of the virus. The polypeptide is Core protein VP3 (Segment-3) (Antilocapra americana (Pronghorn)).